A 1220-amino-acid polypeptide reads, in one-letter code: Plasma membrane calcium-transporting ATPase 1 (1220 aa).

Gly-2 carries the post-translational modification N-acetylglycine. Topologically, residues 2 to 105 (GDMANNSVAY…KTFLQLVWEA (104 aa)) are cytoplasmic. Phosphoserine is present on residues Ser-8 and Ser-17. The helical transmembrane segment at 106 to 126 (LQDVTLIILEIAAIVSLGLSF) threads the bilayer. The Extracellular segment spans residues 127–154 (YQPPEGDNALCGEVSVGEEEGEGETGWI). A helical transmembrane segment spans residues 155-175 (EGAAILLSVVCVVLVTAFNDW). Residues 176 to 366 (SKEKQFRGLQ…KEKSVLQGKL (191 aa)) lie on the Cytoplasmic side of the membrane. The segment at 297-356 (EEEKKDEKKKEKKNKKQDGAIENRNKAKAQDGAAMEMQPLKSEEGGDGDEKDKKKANLPK) is disordered. 2 stretches are compositionally biased toward basic and acidic residues: residues 312–325 (KQDG…KAKA) and 337–356 (KSEE…NLPK). Ser-338 carries the phosphoserine modification. The helical transmembrane segment at 367-386 (TKLAVQIGKAGLLMSAITVI) threads the bilayer. Residues 387–418 (ILVLYFVIDTFWVQKRPWLAECTPIYIQYFVK) lie on the Extracellular side of the membrane. Residues 419-439 (FFIIGVTVLVVAVPEGLPLAV) traverse the membrane as a helical segment. Residues 440–855 (TISLAYSVKK…RNVYDSISKF (416 aa)) lie on the Cytoplasmic side of the membrane. Asp-475 (4-aspartylphosphate intermediate) is an active-site residue. Residues Asp-475, Thr-477, and Asp-797 each contribute to the Mg(2+) site. Residues 856 to 876 (LQFQLTVNVVAVIVAFTGACI) form a helical membrane-spanning segment. Over 877 to 882 (TQDSPL) the chain is Extracellular. A helical membrane pass occupies residues 883–903 (KAVQMLWVNLIMDTLASLALA). The Cytoplasmic portion of the chain corresponds to 904–927 (TEPPTESLLLRKPYGRNKPLISRT). A helical membrane pass occupies residues 928-948 (MMKNILGHAFYQLVVVFTLLF). Residues 949–971 (AGEKFFDIDSGRNAPLHAPPSEH) lie on the Extracellular side of the membrane. A helical membrane pass occupies residues 972–991 (YTIVFNTFVLMQLFNEINAR). The Cytoplasmic portion of the chain corresponds to 992 to 1005 (KIHGERNVFEGIFN). A helical transmembrane segment spans residues 1006-1027 (NAIFCTIVLGTFVVQIIIVQFG). Residues 1028–1039 (GKPFSCSELSIE) are Extracellular-facing. Residues 1040-1060 (QWLWSIFLGMGTLLWGQLIST) form a helical membrane-spanning segment. Over 1061-1220 (IPTSRLKFLK…SPLHSLETSL (160 aa)) the chain is Cytoplasmic. The segment at 1100-1117 (LRRGQILWFRGLNRIQTQ) is calmodulin-binding subdomain A. The residue at position 1116 (Thr-1116) is a Phosphothreonine; by PKC. The required for basolateral membrane targeting stretch occupies residues 1118–1220 (IRVVNAFRSS…SPLHSLETSL (103 aa)). A phosphoserine mark is found at Ser-1140 and Ser-1155. The interval 1160 to 1220 (PLIDDTDAED…SPLHSLETSL (61 aa)) is disordered. Residue Thr-1165 is modified to Phosphothreonine. 2 positions are modified to phosphoserine: Ser-1178 and Ser-1182. Over residues 1200-1220 (MNKSATSSSPGSPLHSLETSL) the composition is skewed to polar residues.

It belongs to the cation transport ATPase (P-type) (TC 3.A.3) family. Type IIB subfamily. Monomer. Dimer. Oligomer. Calmodulin binding. Interacts with PDZD11. Interacts with SLC35G1 and STIM1. Interacts with YWHAE; interacts with the monomeric and dimeric forms of the YWHAE but prefer the monomer form; this interaction inhibits calcium-transporting ATPase activity. Interacts with NPTN; this interaction stabilizes ATP2B1 and increases ATPase activity; this interaction controls T cell calcium homeostasis following T cell activation. Interacts with EPB41; regulates small intestinal calcium absorption through regulation of membrane expression of ATP2B1. In terms of tissue distribution, expressed in the retina, with strongest expression in the outer plexiform layer and lower expression levels in the inner nuclear layer and the inner plexiform layer. Specifically expressed in the following retinal cell types: photoreceptor cells, cone bipolar cells and horizontal cells. Expressed in osteoclasts (at protein level). Expressed at highest levels in brain, intestine, kidney, and stomach, and at lower levels in liver, lung, aorta, portal vein, urinary bladder, diaphragm, seminal vesicles and testes. Expressed in small intestinal epithelium.

The protein localises to the cell membrane. Its subcellular location is the basolateral cell membrane. It is found in the synapse. It localises to the presynaptic cell membrane. The protein resides in the cytoplasmic vesicle. The protein localises to the secretory vesicle. Its subcellular location is the synaptic vesicle membrane. The catalysed reaction is Ca(2+)(in) + ATP + H2O = Ca(2+)(out) + ADP + phosphate + H(+). In terms of biological role, catalyzes the hydrolysis of ATP coupled with the transport of calcium from the cytoplasm to the extracellular space thereby maintaining intracellular calcium homeostasis. Plays a role in blood pressure regulation through regulation of intracellular calcium concentration and nitric oxide production leading to regulation of vascular smooth muscle cells vasoconstriction. Positively regulates bone mineralization through absorption of calcium from the intestine. Plays dual roles in osteoclast differentiation and survival by regulating RANKL-induced calcium oscillations in preosteoclasts and mediating calcium extrusion in mature osteoclasts. Regulates insulin sensitivity through calcium/calmodulin signaling pathway by regulating AKT1 activation and NOS3 activation in endothelial cells. May play a role in synaptic transmission by modulating calcium and proton dynamics at the synaptic vesicles. In Mus musculus (Mouse), this protein is Plasma membrane calcium-transporting ATPase 1.